Reading from the N-terminus, the 208-residue chain is 3-isopropylmalate dehydratase small subunit 2 (208 aa).

This sequence belongs to the LeuD family. LeuD type 1 subfamily. Heterodimer of LeuC and LeuD.

It catalyses the reaction (2R,3S)-3-isopropylmalate = (2S)-2-isopropylmalate. Its pathway is amino-acid biosynthesis; L-leucine biosynthesis; L-leucine from 3-methyl-2-oxobutanoate: step 2/4. In terms of biological role, catalyzes the isomerization between 2-isopropylmalate and 3-isopropylmalate, via the formation of 2-isopropylmaleate. This Salmonella choleraesuis (strain SC-B67) protein is 3-isopropylmalate dehydratase small subunit 2.